Reading from the N-terminus, the 642-residue chain is Threonine--tRNA ligase (642 aa).

The region spanning 1-61 (MPVITLPDGS…ENDATLAIIT (61 aa)) is the TGS domain. A catalytic region spans residues 243 to 534 (DHRKIGKQLD…LTEEFAGFFP (292 aa)). Zn(2+) contacts are provided by Cys-334, His-385, and His-511.

It belongs to the class-II aminoacyl-tRNA synthetase family. Homodimer. The cofactor is Zn(2+).

Its subcellular location is the cytoplasm. It carries out the reaction tRNA(Thr) + L-threonine + ATP = L-threonyl-tRNA(Thr) + AMP + diphosphate + H(+). Functionally, catalyzes the attachment of threonine to tRNA(Thr) in a two-step reaction: L-threonine is first activated by ATP to form Thr-AMP and then transferred to the acceptor end of tRNA(Thr). Also edits incorrectly charged L-seryl-tRNA(Thr). The polypeptide is Threonine--tRNA ligase (Salmonella choleraesuis (strain SC-B67)).